The primary structure comprises 223 residues: MNVKIKKLHNWDMTPTEAILLQRELAQKVSACGTLSSISLVAGADVWHSRTSGMGRAAVVVLSYPDMNLVEVSRSEGDCHIPYIPGLLSFREMPLLLSAFEGLESMPDLILMDGQGLAHPRRLGIASHLGLFLNKPVIGCAKSRLVGEYTPLADEAGSYSDLYHNSQLVGRVLRTRRGVNPLFISVGHKICLEEACSRVADCCRGYRLPEPLRHAHLAAAELI.

2 residues coordinate Mg(2+): Asp-45 and Asp-113.

The protein belongs to the endonuclease V family. The cofactor is Mg(2+).

It is found in the cytoplasm. It catalyses the reaction Endonucleolytic cleavage at apurinic or apyrimidinic sites to products with a 5'-phosphate.. DNA repair enzyme involved in the repair of deaminated bases. Selectively cleaves double-stranded DNA at the second phosphodiester bond 3' to a deoxyinosine leaving behind the intact lesion on the nicked DNA. The sequence is that of Endonuclease V from Dehalococcoides mccartyi (strain ATCC BAA-2100 / JCM 16839 / KCTC 5957 / BAV1).